Reading from the N-terminus, the 231-residue chain is Probable transglycosylase SceD (231 aa).

Positions Met-1–Ala-27 are cleaved as a signal peptide. Polar residues predominate over residues Ala-103 to Glu-116. Positions Ala-103 to Val-153 are disordered. The span at Ala-119–Gln-137 shows a compositional bias: low complexity. Over residues Val-138–Val-153 the composition is skewed to polar residues.

Belongs to the transglycosylase family. SceD subfamily.

It localises to the secreted. Functionally, is able to cleave peptidoglycan and affects clumping and separation of bacterial cells. The protein is Probable transglycosylase SceD (sceD) of Staphylococcus aureus (strain COL).